We begin with the raw amino-acid sequence, 342 residues long: MVKVYYNGDIKENVLAGKTVAVIGYGSQGHAHALNLKESGVDVIVGVRQGKSFTQAQEDGHKVFSVKEAAAQAEIIMVLLPDEQQQKVYEAEIKDELTAGKSLVFAHGFNVHFHQIVPPADVDVFLVAPKGPGHLVRRTYEQGAGVPALFAIYQDVTGEARDKALAYAKGIGGARAGVLETTFKEETETDLFGEQAVLCGGLSALVKAGFETLTEAGYQPELAYFECLHELKLIVDLMYEEGLAGMRYSISDTAQWGDFVSGPRVVDAKVKESMKEVLKDIQNGTFAKEWIVENQVNRPRFNAINASENEHQIEVVGRKLREMMPFVKQGKKKEAVVSVAQN.

The 180-residue stretch at 2–181 folds into the KARI N-terminal Rossmann domain; the sequence is VKVYYNGDIK…GGARAGVLET (180 aa). Residues 25 to 28, R48, S52, and 82 to 85 each bind NADP(+); these read YGSQ and DEQQ. H107 is an active-site residue. NADP(+) is bound at residue G133. The 146-residue stretch at 182–327 folds into the KARI C-terminal knotted domain; it reads TFKEETETDL…RKLREMMPFV (146 aa). Mg(2+) is bound by residues D190, E194, E226, and E230. S251 provides a ligand contact to substrate.

It belongs to the ketol-acid reductoisomerase family. Mg(2+) serves as cofactor.

The enzyme catalyses (2R)-2,3-dihydroxy-3-methylbutanoate + NADP(+) = (2S)-2-acetolactate + NADPH + H(+). It catalyses the reaction (2R,3R)-2,3-dihydroxy-3-methylpentanoate + NADP(+) = (S)-2-ethyl-2-hydroxy-3-oxobutanoate + NADPH + H(+). The protein operates within amino-acid biosynthesis; L-isoleucine biosynthesis; L-isoleucine from 2-oxobutanoate: step 2/4. It functions in the pathway amino-acid biosynthesis; L-valine biosynthesis; L-valine from pyruvate: step 2/4. Its function is as follows. Involved in the biosynthesis of branched-chain amino acids (BCAA). Catalyzes an alkyl-migration followed by a ketol-acid reduction of (S)-2-acetolactate (S2AL) to yield (R)-2,3-dihydroxy-isovalerate. In the isomerase reaction, S2AL is rearranged via a Mg-dependent methyl migration to produce 3-hydroxy-3-methyl-2-ketobutyrate (HMKB). In the reductase reaction, this 2-ketoacid undergoes a metal-dependent reduction by NADPH to yield (R)-2,3-dihydroxy-isovalerate. This Bacillus subtilis (strain 168) protein is Ketol-acid reductoisomerase (NADP(+)).